The following is a 162-amino-acid chain: Phospholipase A and acyltransferase 3 (162 aa).

Residues 1-133 lie on the Cytoplasmic side of the membrane; it reads MRAPIPEPKP…VARSDQVRDV (133 aa). The LRAT domain occupies 13–129; that stretch reads LIEIFRPFYR…LRYGVARSDQ (117 aa). Catalysis depends on residues histidine 23 and histidine 35. Catalysis depends on cysteine 113, which acts as the Acyl-thioester intermediate. Residues 134 to 154 traverse the membrane as a helical segment; it reads IIAASVAGMGLAAMSLIGVMF. Residues 155–162 lie on the Lumenal side of the membrane; it reads SRNKRQKQ.

It belongs to the H-rev107 family. Interacts with PPP2R1A; this interaction might decrease PP2A activity. Widely expressed. Low expression, if any, in hematopoietic cells and thymus. In testis, confined to round spermatids. Expressed in normal ovarian epithelial cells. Down-regulated in some ovarian carcinomas and testicular germ cell tumors. Highly expressed in white adipose tissue.

Its subcellular location is the cell membrane. The protein localises to the cytoplasm. The protein resides in the cytosol. It localises to the perinuclear region. It is found in the peroxisome membrane. Its subcellular location is the mitochondrion membrane. The protein localises to the nucleus envelope. The protein resides in the lysosome membrane. It localises to the endoplasmic reticulum membrane. It catalyses the reaction a 1,2-diacyl-sn-glycero-3-phosphocholine + H2O = a 1-acyl-sn-glycero-3-phosphocholine + a fatty acid + H(+). The enzyme catalyses a 1,2-diacyl-sn-glycero-3-phosphocholine + H2O = a 2-acyl-sn-glycero-3-phosphocholine + a fatty acid + H(+). It carries out the reaction 1,2-dihexadecanoyl-sn-glycero-3-phosphocholine + H2O = 1-hexadecanoyl-sn-glycero-3-phosphocholine + hexadecanoate + H(+). The catalysed reaction is 1,2-dihexadecanoyl-sn-glycero-3-phosphocholine + H2O = 2-hexadecanoyl-sn-glycero-3-phosphocholine + hexadecanoate + H(+). It catalyses the reaction 1-hexadecanoyl-2-(9Z-octadecenoyl)-sn-glycero-3-phosphocholine + H2O = 2-(9Z-octadecenoyl)-sn-glycero-3-phosphocholine + hexadecanoate + H(+). The enzyme catalyses 1-hexadecanoyl-2-(9Z-octadecenoyl)-sn-glycero-3-phosphocholine + H2O = 1-hexadecanoyl-sn-glycero-3-phosphocholine + (9Z)-octadecenoate + H(+). It carries out the reaction 1-hexadecanoyl-2-(5Z,8Z,11Z,14Z-eicosatetraenoyl)-sn-glycero-3-phosphocholine + H2O = 1-hexadecanoyl-sn-glycero-3-phosphocholine + (5Z,8Z,11Z,14Z)-eicosatetraenoate + H(+). The catalysed reaction is 1-hexadecanoyl-2-(5Z,8Z,11Z,14Z-eicosatetraenoyl)-sn-glycero-3-phosphocholine + H2O = 2-(5Z,8Z,11Z,14Z)-eicosatetraenoyl-sn-glycero-3-phosphocholine + hexadecanoate + H(+). It catalyses the reaction 1-hexadecanoyl-2-(9Z,12Z-octadecadienoyl)-sn-glycero-3-phosphoethanolamine + H2O = 1-hexadecanoyl-sn-glycero-3-phosphoethanolamine + (9Z,12Z)-octadecadienoate + H(+). The enzyme catalyses 1-hexadecanoyl-2-(9Z,12Z-octadecadienoyl)-sn-glycero-3-phosphoethanolamine + H2O = 2-(9Z,12Z)-octadecadienoyl-sn-glycero-3-phosphoethanolamine + hexadecanoate + H(+). It carries out the reaction 1-hexadecanoyl-2-(5Z,8Z,11Z,14Z-eicosatetraenoyl)-sn-glycero-3-phosphoethanolamine + H2O = 1-hexadecanoyl-sn-glycero-3-phosphoethanolamine + (5Z,8Z,11Z,14Z)-eicosatetraenoate + H(+). The catalysed reaction is 1-hexadecanoyl-2-(5Z,8Z,11Z,14Z-eicosatetraenoyl)-sn-glycero-3-phosphoethanolamine + H2O = 2-(5Z,8Z,11Z,14Z)-eicosatetraenoyl-sn-glycero-3-phosphoethanolamine + hexadecanoate + H(+). It catalyses the reaction 1-hexanoyl-2-acyl-sn-glycero-3-phosphocholine + H2O = hexanoate + a 2-acyl-sn-glycero-3-phosphocholine + H(+). The enzyme catalyses 1-hexanoyl-2-acyl-sn-glycero-3-phosphocholine + H2O = 1-hexanoyl-sn-glycero-3-phosphocholine + a fatty acid + H(+). It carries out the reaction 1,2-diheptadecanoyl-sn-glycero-3-phosphoethanolamine + 1-(9Z-octadecenoyl)-2-hexadecanoyl-sn-glycero-3-phosphocholine = 1,2-diheptadecanoyl-sn-glycero-3-phospho-N-hexadecanoyl-ethanolamine + 1-(9Z-octadecenoyl)-sn-glycero-3-phosphocholine + H(+). The catalysed reaction is 1,2-diheptadecanoyl-sn-glycero-3-phosphoethanolamine + 1-(9Z-octadecenoyl)-2-hexadecanoyl-sn-glycero-3-phosphocholine = 1,2-diheptadecanoyl-sn-glycero-3-phospho-N-(9Z-octadecenoyl)-ethanolamine + 2-hexadecanoyl-sn-glycero-3-phosphocholine + H(+). It catalyses the reaction 1,2-dihexanoyl-sn-glycero-3-phosphoethanolamine + 2-heptanoyl-sn-glycero-3-phosphocholine = hexanoyl-sn-glycero-3-phosphoethanolamine + 1-hexanoyl-2-heptanoyl-sn-glycero-3-phosphocholine. The enzyme catalyses 1-hexadecanoyl-2-octadecanoyl-sn-glycero-3-phosphocholine + H2O = octadecanoate + 1-hexadecanoyl-sn-glycero-3-phosphocholine + H(+). It carries out the reaction 1-hexadecanoyl-2-octadecanoyl-sn-glycero-3-phosphocholine + H2O = 2-octadecanoyl-sn-glycero-3-phosphocholine + hexadecanoate + H(+). The catalysed reaction is 1-octadecanoyl-2-hexadecanoyl-sn-glycero-3-phosphocholine + H2O = 1-octadecanoyl-sn-glycero-3-phosphocholine + hexadecanoate + H(+). It catalyses the reaction 1-octadecanoyl-2-hexadecanoyl-sn-glycero-3-phosphocholine + H2O = 2-hexadecanoyl-sn-glycero-3-phosphocholine + octadecanoate + H(+). The enzyme catalyses 1-hexadecanoyl-2-(9Z,12Z-octadecadienoyl)-sn-glycero-3-phosphocholine + H2O = (9Z,12Z)-octadecadienoate + 1-hexadecanoyl-sn-glycero-3-phosphocholine + H(+). It carries out the reaction 1-hexadecanoyl-2-(9Z,12Z-octadecadienoyl)-sn-glycero-3-phosphocholine + H2O = 2-(9Z,12Z-octadecadienoyl)-sn-glycero-3-phosphocholine + hexadecanoate + H(+). The catalysed reaction is 1,2-di-(9Z-octadecenoyl)-sn-glycero-3-phosphocholine + H2O = 2-(9Z-octadecenoyl)-sn-glycero-3-phosphocholine + (9Z)-octadecenoate + H(+). It catalyses the reaction 1,2-dihexadecanoyl-sn-glycero-3-phosphocholine + H2O = hexadecanoyl-sn-glycero-3-phosphocholine + hexadecanoate + H(+). The enzyme catalyses 1,2-di-(9Z-octadecenoyl)-sn-glycero-3-phosphocholine + H2O = 1-(9Z-octadecenoyl)-sn-glycero-3-phosphocholine + (9Z)-octadecenoate + H(+). It carries out the reaction 1,2-di-(9Z-octadecenoyl)-sn-glycero-3-phosphoethanolamine + 1,2-dihexadecanoyl-sn-glycero-3-phosphocholine = hexadecanoyl-sn-glycero-3-phosphocholine + N-hexadecanoyl-1,2-di-(9Z-octadecenoyl)-sn-glycero-3-phosphoethanolamine + H(+). The catalysed reaction is 1,2-di-(9Z,12Z-octadecadienoyl)-sn-glycero-3-phosphocholine + H2O = 1-(9Z,12Z)-octadecadienoyl-sn-glycero-3-phosphocholine + (9Z,12Z)-octadecadienoate + H(+). Functionally, exhibits both phospholipase A1/2 and acyltransferase activities. Shows phospholipase A1 (PLA1) and A2 (PLA2) activity, catalyzing the calcium-independent release of fatty acids from the sn-1 or sn-2 position of glycerophospholipids. For most substrates, PLA1 activity is much higher than PLA2 activity. Shows O-acyltransferase activity,catalyzing the transfer of a fatty acyl group from glycerophospholipid to the hydroxyl group of lysophospholipid. Shows N-acyltransferase activity, catalyzing the calcium-independent transfer of a fatty acyl group at the sn-1 position of phosphatidylcholine (PC) and other glycerophospholipids to the primary amine of phosphatidylethanolamine (PE), forming N-acylphosphatidylethanolamine (NAPE), which serves as precursor for N-acylethanolamines (NAEs). Exhibits high N-acyltransferase activity and low phospholipase A1/2 activity. Required for complete organelle rupture and degradation that occur during eye lens terminal differentiation, when fiber cells that compose the lens degrade all membrane-bound organelles in order to provide lens with transparency to allow the passage of light. Organelle membrane degradation is probably catalyzed by the phospholipase activity. In terms of biological role, (Microbial infection) Acts as a host factor for picornaviruses: required during early infection to promote viral genome release into the cytoplasm. May act as a cellular sensor of membrane damage at sites of virus entry, which relocalizes to sites of membrane rupture upon virus unfection. Facilitates safe passage of the RNA away from LGALS8, enabling viral genome translation by host ribosome. May also be involved in initiating pore formation, increasing pore size or in maintaining pores for genome delivery. The lipid-modifying enzyme activity is required for this process. This chain is Phospholipase A and acyltransferase 3, found in Homo sapiens (Human).